Reading from the N-terminus, the 97-residue chain is Aspartyl/glutamyl-tRNA(Asn/Gln) amidotransferase subunit C (97 aa).

This sequence belongs to the GatC family. As to quaternary structure, heterotrimer of A, B and C subunits.

The enzyme catalyses L-glutamyl-tRNA(Gln) + L-glutamine + ATP + H2O = L-glutaminyl-tRNA(Gln) + L-glutamate + ADP + phosphate + H(+). The catalysed reaction is L-aspartyl-tRNA(Asn) + L-glutamine + ATP + H2O = L-asparaginyl-tRNA(Asn) + L-glutamate + ADP + phosphate + 2 H(+). Its function is as follows. Allows the formation of correctly charged Asn-tRNA(Asn) or Gln-tRNA(Gln) through the transamidation of misacylated Asp-tRNA(Asn) or Glu-tRNA(Gln) in organisms which lack either or both of asparaginyl-tRNA or glutaminyl-tRNA synthetases. The reaction takes place in the presence of glutamine and ATP through an activated phospho-Asp-tRNA(Asn) or phospho-Glu-tRNA(Gln). The protein is Aspartyl/glutamyl-tRNA(Asn/Gln) amidotransferase subunit C of Clostridium botulinum (strain Eklund 17B / Type B).